The primary structure comprises 417 residues: Dibenzothiophene monooxygenase (417 aa).

The interval Asp19 to Trp125 is helical N-terminus. Residues Tyr96, Asn129–Asn134, Lys159–Ser163, Arg282, Ala369–Arg370, and His391 each bind FMN. The segment at Trp126–Pro234 is central beta-barrel N-terminus. A lid loop region spans residues Ser131 to Lys142. A helical C-terminus region spans residues Asn235–Gln409.

It belongs to the DszC flavin monooxygenase family. Homotetramer.

The protein localises to the cytoplasm. It carries out the reaction dibenzothiophene + 2 FMNH2 + 2 O2 = dibenzothiophene 5,5-dioxide + 2 FMN + 2 H2O + 2 H(+). It catalyses the reaction dibenzothiophene + FMNH2 + O2 = dibenzothiophene 5-oxide + FMN + H2O + H(+). The catalysed reaction is dibenzothiophene 5-oxide + FMNH2 + O2 = dibenzothiophene 5,5-dioxide + FMN + H2O + H(+). Its pathway is sulfur metabolism; dibenzothiophene degradation. In terms of biological role, catalyzes the first step of the '4S' desulfurization pathway that removes covalently bound sulfur from dibenzothiophene (DBT) without breaking carbon-carbon bonds. Sulfur dioxygenase which converts DBT to DBT-sulfone (DBTO2 or DBT 5,5-dioxide) in a stepwise manner. The sequence is that of Dibenzothiophene monooxygenase from Rhodococcus erythropolis (Arthrobacter picolinophilus).